We begin with the raw amino-acid sequence, 190 residues long: Ribonuclease HII (190 aa).

The RNase H type-2 domain maps to 3-190 (KLIAGVDEVG…KPVKALLEEK (188 aa)). Asp-9, Glu-10, and Asp-101 together coordinate a divalent metal cation.

It belongs to the RNase HII family. Requires Mn(2+) as cofactor. Mg(2+) is required as a cofactor.

The protein resides in the cytoplasm. It catalyses the reaction Endonucleolytic cleavage to 5'-phosphomonoester.. Its function is as follows. Endonuclease that specifically degrades the RNA of RNA-DNA hybrids. In Alteromonas mediterranea (strain DSM 17117 / CIP 110805 / LMG 28347 / Deep ecotype), this protein is Ribonuclease HII.